We begin with the raw amino-acid sequence, 363 residues long: Adenosine deaminase (363 aa).

N-acetylalanine is present on Ala-2. The Zn(2+) site is built by His-15 and His-17. Substrate-binding residues include His-17 and Asp-19. Lys-54 is modified (N6-acetyllysine). Position 184 (Gly-184) interacts with substrate. Position 214 (His-214) interacts with Zn(2+). Residue Glu-217 is the Proton donor of the active site. Position 232 is an N6-acetyllysine (Lys-232). Asp-295 contributes to the Zn(2+) binding site. Asp-296 provides a ligand contact to substrate.

The protein belongs to the metallo-dependent hydrolases superfamily. Adenosine and AMP deaminases family. Interacts with DPP4 (via extracellular domain). Interacts with PLG (via Kringle 4 domain); the interaction stimulates PLG activation when in complex with DPP4. It depends on Zn(2+) as a cofactor. As to expression, expressed in gastrointestinal tissues (at protein level).

It localises to the cell membrane. Its subcellular location is the cell junction. It is found in the cytoplasmic vesicle lumen. The protein resides in the cytoplasm. The protein localises to the lysosome. It carries out the reaction adenosine + H2O + H(+) = inosine + NH4(+). The catalysed reaction is 2'-deoxyadenosine + H2O + H(+) = 2'-deoxyinosine + NH4(+). The enzyme catalyses cordycepin + H2O + H(+) = 3'-deoxyinosine + NH4(+). Functionally, catalyzes the hydrolytic deamination of adenosine and 2-deoxyadenosine. Plays an important role in purine metabolism and in adenosine homeostasis. Modulates signaling by extracellular adenosine, and so contributes indirectly to cellular signaling events. Acts as a positive regulator of T-cell coactivation, by binding DPP4. Its interaction with DPP4 regulates lymphocyte-epithelial cell adhesion. Enhances dendritic cell immunogenicity by affecting dendritic cell costimulatory molecule expression and cytokines and chemokines secretion. Enhances CD4+ T-cell differentiation and proliferation. Acts as a positive modulator of adenosine receptors ADORA1 and ADORA2A, by enhancing their ligand affinity via conformational change. Stimulates plasminogen activation. Plays a role in male fertility. Plays a protective role in early postimplantation embryonic development. Also responsible for the deamination of cordycepin (3'-deoxyadenosine), a fungal natural product that shows antitumor, antibacterial, antifungal, antivirus, and immune regulation properties. This chain is Adenosine deaminase (ADA), found in Bos taurus (Bovine).